The chain runs to 288 residues: 4-diphosphocytidyl-2-C-methyl-D-erythritol kinase (288 aa).

Lysine 8 is a catalytic residue. An ATP-binding site is contributed by 92 to 102; it reads PVAAGMAGGST. Residue aspartate 134 is part of the active site.

It belongs to the GHMP kinase family. IspE subfamily.

The catalysed reaction is 4-CDP-2-C-methyl-D-erythritol + ATP = 4-CDP-2-C-methyl-D-erythritol 2-phosphate + ADP + H(+). It participates in isoprenoid biosynthesis; isopentenyl diphosphate biosynthesis via DXP pathway; isopentenyl diphosphate from 1-deoxy-D-xylulose 5-phosphate: step 3/6. In terms of biological role, catalyzes the phosphorylation of the position 2 hydroxy group of 4-diphosphocytidyl-2C-methyl-D-erythritol. The chain is 4-diphosphocytidyl-2-C-methyl-D-erythritol kinase from Clostridium perfringens (strain 13 / Type A).